Reading from the N-terminus, the 207-residue chain is Peptidyl-tRNA hydrolase (207 aa).

Tyr14 contacts tRNA. The active-site Proton acceptor is the His19. Residues Phe68, Asn70, and Asn116 each contribute to the tRNA site.

Belongs to the PTH family. Monomer.

It localises to the cytoplasm. The enzyme catalyses an N-acyl-L-alpha-aminoacyl-tRNA + H2O = an N-acyl-L-amino acid + a tRNA + H(+). Functionally, hydrolyzes ribosome-free peptidyl-tRNAs (with 1 or more amino acids incorporated), which drop off the ribosome during protein synthesis, or as a result of ribosome stalling. Catalyzes the release of premature peptidyl moieties from peptidyl-tRNA molecules trapped in stalled 50S ribosomal subunits, and thus maintains levels of free tRNAs and 50S ribosomes. The chain is Peptidyl-tRNA hydrolase from Hyphomonas neptunium (strain ATCC 15444).